Here is a 573-residue protein sequence, read N- to C-terminus: Potassium-transporting ATPase potassium-binding subunit (573 aa).

The next 10 membrane-spanning stretches (helical) occupy residues isoleucine 6–isoleucine 26, phenylalanine 66–leucine 86, alanine 135–isoleucine 155, valine 177–valine 197, isoleucine 257–valine 277, glycine 283–isoleucine 303, isoleucine 382–phenylalanine 402, methionine 428–isoleucine 448, isoleucine 493–leucine 513, and phenylalanine 537–proline 557.

It belongs to the KdpA family. In terms of assembly, the system is composed of three essential subunits: KdpA, KdpB and KdpC.

It is found in the cell inner membrane. Part of the high-affinity ATP-driven potassium transport (or Kdp) system, which catalyzes the hydrolysis of ATP coupled with the electrogenic transport of potassium into the cytoplasm. This subunit binds the periplasmic potassium ions and delivers the ions to the membrane domain of KdpB through an intramembrane tunnel. In Francisella tularensis subsp. tularensis (strain WY96-3418), this protein is Potassium-transporting ATPase potassium-binding subunit.